Reading from the N-terminus, the 132-residue chain is Small ribosomal subunit protein uS8 (132 aa).

Belongs to the universal ribosomal protein uS8 family. As to quaternary structure, part of the 30S ribosomal subunit. Contacts proteins S5 and S12.

In terms of biological role, one of the primary rRNA binding proteins, it binds directly to 16S rRNA central domain where it helps coordinate assembly of the platform of the 30S subunit. The chain is Small ribosomal subunit protein uS8 from Desulforamulus reducens (strain ATCC BAA-1160 / DSM 100696 / MI-1) (Desulfotomaculum reducens).